A 431-amino-acid polypeptide reads, in one-letter code: uncharacterized protein (431 aa).

The Peptidase S8 domain occupies 1-258 (MPSQMREAIT…HGLIDLERAG (258 aa)).

It belongs to the peptidase S8 family.

This is an uncharacterized protein from Sinorhizobium fredii (strain NBRC 101917 / NGR234).